Here is a 131-residue protein sequence, read N- to C-terminus: MEARPLATPEEAWRIASSLRYRHIEGTVVAVVQDVETKEVLMVGHMDPIAVVLTLTTGLAHYYSTTRKRIWLKGETSGHYQIVKEFRSDCDGDAVVIKVVQIGAACHTGSRSCFESKYSLIKALKLSLRHG.

Asp-89 contributes to the Mg(2+) binding site. Position 90 (Cys-90) interacts with Zn(2+). Residues Asp-91 and Asp-93 each coordinate Mg(2+). Positions 106 and 113 each coordinate Zn(2+).

Belongs to the PRA-CH family. As to quaternary structure, homodimer. Mg(2+) serves as cofactor. Requires Zn(2+) as cofactor.

It localises to the cytoplasm. The catalysed reaction is 1-(5-phospho-beta-D-ribosyl)-5'-AMP + H2O = 1-(5-phospho-beta-D-ribosyl)-5-[(5-phospho-beta-D-ribosylamino)methylideneamino]imidazole-4-carboxamide. Its pathway is amino-acid biosynthesis; L-histidine biosynthesis; L-histidine from 5-phospho-alpha-D-ribose 1-diphosphate: step 3/9. Functionally, catalyzes the hydrolysis of the adenine ring of phosphoribosyl-AMP. This chain is Phosphoribosyl-AMP cyclohydrolase, found in Pyrobaculum aerophilum (strain ATCC 51768 / DSM 7523 / JCM 9630 / CIP 104966 / NBRC 100827 / IM2).